We begin with the raw amino-acid sequence, 236 residues long: LexA repressor (236 aa).

Positions 1 to 25 (MNDSNDTSVAGGAAGADSRVLSADS) are disordered. A DNA-binding region (H-T-H motif) is located at residues 51–71 (IREIGDAVGLTSTSSVAHQLR). Catalysis depends on for autocatalytic cleavage activity residues Ser160 and Lys197.

This sequence belongs to the peptidase S24 family. Homodimer.

It carries out the reaction Hydrolysis of Ala-|-Gly bond in repressor LexA.. In terms of biological role, represses a number of genes involved in the response to DNA damage (SOS response), including recA and lexA. In the presence of single-stranded DNA, RecA interacts with LexA causing an autocatalytic cleavage which disrupts the DNA-binding part of LexA, leading to derepression of the SOS regulon and eventually DNA repair. This Mycobacterium bovis (strain BCG / Pasteur 1173P2) protein is LexA repressor.